The sequence spans 309 residues: Aspartate carbamoyltransferase catalytic subunit (309 aa).

Residues Arg55 and Thr56 each coordinate carbamoyl phosphate. Lys85 serves as a coordination point for L-aspartate. Positions 106, 135, and 138 each coordinate carbamoyl phosphate. 2 residues coordinate L-aspartate: Arg168 and Arg230. Carbamoyl phosphate contacts are provided by Leu268 and Pro269.

This sequence belongs to the aspartate/ornithine carbamoyltransferase superfamily. ATCase family. In terms of assembly, heterododecamer (2C3:3R2) of six catalytic PyrB chains organized as two trimers (C3), and six regulatory PyrI chains organized as three dimers (R2).

It catalyses the reaction carbamoyl phosphate + L-aspartate = N-carbamoyl-L-aspartate + phosphate + H(+). The protein operates within pyrimidine metabolism; UMP biosynthesis via de novo pathway; (S)-dihydroorotate from bicarbonate: step 2/3. Catalyzes the condensation of carbamoyl phosphate and aspartate to form carbamoyl aspartate and inorganic phosphate, the committed step in the de novo pyrimidine nucleotide biosynthesis pathway. In Vibrio cholerae serotype O1 (strain ATCC 39541 / Classical Ogawa 395 / O395), this protein is Aspartate carbamoyltransferase catalytic subunit.